The following is a 138-amino-acid chain: Small ribosomal subunit protein uS12 (138 aa).

A compositionally biased stretch (polar residues) spans 1 to 22; it reads MPTINQLVRQGRKSISTKSDSP. The interval 1-45 is disordered; that stretch reads MPTINQLVRQGRKSISTKSDSPALNFGYNSKKKSLTNNPAPQKRG. A 3-methylthioaspartic acid modification is found at aspartate 102.

This sequence belongs to the universal ribosomal protein uS12 family. Part of the 30S ribosomal subunit. Contacts proteins S8 and S17. May interact with IF1 in the 30S initiation complex.

With S4 and S5 plays an important role in translational accuracy. Its function is as follows. Interacts with and stabilizes bases of the 16S rRNA that are involved in tRNA selection in the A site and with the mRNA backbone. Located at the interface of the 30S and 50S subunits, it traverses the body of the 30S subunit contacting proteins on the other side and probably holding the rRNA structure together. The combined cluster of proteins S8, S12 and S17 appears to hold together the shoulder and platform of the 30S subunit. In Lacticaseibacillus paracasei (strain ATCC 334 / BCRC 17002 / CCUG 31169 / CIP 107868 / KCTC 3260 / NRRL B-441) (Lactobacillus paracasei), this protein is Small ribosomal subunit protein uS12.